The following is a 525-amino-acid chain: MSVEKQTAMRRTFAIISHPDAGKTTLTEKLLLFGGAIQLAGTVKSRKAARHATSDWMELEKQRGISVTTSVMQFPYKDYLINLLDTPGHADFTEDTYRTLTAVDSALMVIDAAKGVEPRTIKLMEVCRLRHTPIMTFINKMDRDTRPSIELLDEIESILRIHCAPVTWPIGMGKYFKGIYHLIEDAIYLYQPGKHERVGESERIEGINNPELDKKLGDLASELRNEIELVKGASHPFEREGYLKGELTPIFFGSAINNFGVGELLDAFVKEAPPPQGRETNSRLVKPEEEKFSGFVFKIQANMDPGHRDRIAFLRIASGQYQKGMKAYHVRLKKEIQINNALTFMAGKRENAEEAWPGDIIGLHNHGTIQIGDTFTQGERFKFTGIPNFASELFRLVRLKDPLKQKALLKGLTQLSEEGATQLFRPLDSNELILGAVGLLQFDVVAYRLENEYNVKCVYESVNVVTARWVICDDKAVLERFNQEQSRNLAYDGGGHLTYLAPSRVNLEITMEKWPEIQFSETREH.

The 269-residue stretch at A8–Q276 folds into the tr-type G domain. GTP-binding positions include S17 to T24, D85 to H89, and N139 to D142.

This sequence belongs to the TRAFAC class translation factor GTPase superfamily. Classic translation factor GTPase family. PrfC subfamily.

It is found in the cytoplasm. Increases the formation of ribosomal termination complexes and stimulates activities of RF-1 and RF-2. It binds guanine nucleotides and has strong preference for UGA stop codons. It may interact directly with the ribosome. The stimulation of RF-1 and RF-2 is significantly reduced by GTP and GDP, but not by GMP. This Coxiella burnetii (strain CbuK_Q154) (Coxiella burnetii (strain Q154)) protein is Peptide chain release factor 3.